Here is a 549-residue protein sequence, read N- to C-terminus: Membrane protein insertase YidC (549 aa).

The helical transmembrane segment at 9 to 29 (LRLILAIALSFLFIALYSYFF) threads the bilayer. The segment covering 37-51 (TETTKQETTNNHTAT) has biased composition (low complexity). The interval 37–56 (TETTKQETTNNHTATSPTAS) is disordered. A run of 5 helical transmembrane segments spans residues 328 to 348 (VIEY…LDYL), 351 to 371 (FVGN…IILY), 417 to 437 (GANP…FFAI), 452 to 472 (WVLW…PLLM), and 498 to 518 (LLPL…VLYW).

Belongs to the OXA1/ALB3/YidC family. Type 1 subfamily. Interacts with the Sec translocase complex via SecD. Specifically interacts with transmembrane segments of nascent integral membrane proteins during membrane integration.

Its subcellular location is the cell inner membrane. Its function is as follows. Required for the insertion and/or proper folding and/or complex formation of integral membrane proteins into the membrane. Involved in integration of membrane proteins that insert both dependently and independently of the Sec translocase complex, as well as at least some lipoproteins. Aids folding of multispanning membrane proteins. This chain is Membrane protein insertase YidC, found in Helicobacter pylori (strain J99 / ATCC 700824) (Campylobacter pylori J99).